Reading from the N-terminus, the 249-residue chain is Ciliogenesis and planar polarity effector 2 (249 aa).

Positions proline 46 to glutamate 249 are small GTPase-like. GTP-binding positions include glycine 58–threonine 65 and threonine 171–aspartate 174.

Belongs to the small GTPase superfamily. Rab family. In terms of assembly, interacts with fuz.

The protein resides in the cytoplasm. It is found in the cytoskeleton. The protein localises to the cilium basal body. Potential effector of the planar cell polarity signaling pathway. Plays a role in targeted membrane trafficking most probably at the level of vesicle fusion with membranes. Involved in cilium biogenesis by regulating the transport of cargo proteins to the basal body and to the apical tips of cilia. More generally involved in exocytosis in secretory cells. This chain is Ciliogenesis and planar polarity effector 2, found in Xenopus laevis (African clawed frog).